A 611-amino-acid polypeptide reads, in one-letter code: Procollagen galactosyltransferase 1-A (611 aa).

The first 24 residues, 1–24 (MSQAGVDRLLRGLQLLLLVLRLSA), serve as a signal peptide directing secretion. Residues asparagine 85, asparagine 173, asparagine 312, asparagine 370, and asparagine 568 are each glycosylated (N-linked (GlcNAc...) asparagine). The span at 575–591 (WDRAKSRKTQQQEKLRS) shows a compositional bias: basic and acidic residues. The segment at 575–611 (WDRAKSRKTQQQEKLRSEALNSPSLGSPFDNTARDEL) is disordered. The short motif at 608–611 (RDEL) is the Prevents secretion from ER element.

The protein belongs to the glycosyltransferase 25 family.

The protein resides in the endoplasmic reticulum lumen. The catalysed reaction is (5R)-5-hydroxy-L-lysyl-[collagen] + UDP-alpha-D-galactose = (5R)-5-O-(beta-D-galactosyl)-5-hydroxy-L-lysyl-[collagen] + UDP + H(+). Its function is as follows. Beta-galactosyltransferase that transfers beta-galactose to hydroxylysine residues of type I collagen. By acting on collagen glycosylation, facilitates the formation of collagen triple helix. In Xenopus laevis (African clawed frog), this protein is Procollagen galactosyltransferase 1-A (colgalt1-a).